The sequence spans 183 residues: Acireductone dioxygenase (183 aa).

Fe(2+) is bound by residues His95, His97, Glu101, and His139. Ni(2+) is bound by residues His95, His97, Glu101, and His139.

Belongs to the acireductone dioxygenase (ARD) family. Monomer. It depends on Fe(2+) as a cofactor. Ni(2+) serves as cofactor.

It catalyses the reaction 1,2-dihydroxy-5-(methylsulfanyl)pent-1-en-3-one + O2 = 3-(methylsulfanyl)propanoate + CO + formate + 2 H(+). The catalysed reaction is 1,2-dihydroxy-5-(methylsulfanyl)pent-1-en-3-one + O2 = 4-methylsulfanyl-2-oxobutanoate + formate + 2 H(+). It functions in the pathway amino-acid biosynthesis; L-methionine biosynthesis via salvage pathway; L-methionine from S-methyl-5-thio-alpha-D-ribose 1-phosphate: step 5/6. Its function is as follows. Catalyzes 2 different reactions between oxygen and the acireductone 1,2-dihydroxy-3-keto-5-methylthiopentene (DHK-MTPene) depending upon the metal bound in the active site. Fe-containing acireductone dioxygenase (Fe-ARD) produces formate and 2-keto-4-methylthiobutyrate (KMTB), the alpha-ketoacid precursor of methionine in the methionine recycle pathway. Ni-containing acireductone dioxygenase (Ni-ARD) produces methylthiopropionate, carbon monoxide and formate, and does not lie on the methionine recycle pathway. The sequence is that of Acireductone dioxygenase from Hydrogenobaculum sp. (strain Y04AAS1).